A 290-amino-acid polypeptide reads, in one-letter code: S-adenosylmethionine-dependent nucleotide dehydratase (290 aa).

The region spanning 6-226 is the Radical SAM core domain; sequence SGNNIIPSVN…VNRHSKNKFL (221 aa). [4Fe-4S] cluster-binding residues include cysteine 22, cysteine 26, and cysteine 29.

It belongs to the radical SAM superfamily. Viperin family. [4Fe-4S] cluster is required as a cofactor.

The catalysed reaction is UTP + AH2 + S-adenosyl-L-methionine = 3'-deoxy-3',4'-didehydro-UTP + 5'-deoxyadenosine + L-methionine + A + H2O + H(+). In terms of biological role, expression of pVip47 in E.coli (strain MG1655) confers resistance to phage P1; has no effect against T7. Catalyzes the conversion of uridine triphosphate (UTP) to 3'-deoxy-3',4'-didehydro-UTP (ddhUTP), probably via a SAM-dependent radical mechanism. The modified nucleotide represses transcription from T7 RNA polymerase-directed genes (possibly by acting as chain terminators), strongly suggesting these nucleotides block viral polymerase transcription. How this protein allows bacteria to resist viruses that do not encode their own RNA polymerase (such as lambda, P1) is unknown. The chain is S-adenosylmethionine-dependent nucleotide dehydratase from Flammeovirga pacifica.